The chain runs to 460 residues: 3-isopropylmalate dehydratase large subunit (460 aa).

The [4Fe-4S] cluster site is built by Cys338, Cys398, and Cys401.

This sequence belongs to the aconitase/IPM isomerase family. LeuC type 1 subfamily. As to quaternary structure, heterodimer of LeuC and LeuD. Requires [4Fe-4S] cluster as cofactor.

The enzyme catalyses (2R,3S)-3-isopropylmalate = (2S)-2-isopropylmalate. It functions in the pathway amino-acid biosynthesis; L-leucine biosynthesis; L-leucine from 3-methyl-2-oxobutanoate: step 2/4. In terms of biological role, catalyzes the isomerization between 2-isopropylmalate and 3-isopropylmalate, via the formation of 2-isopropylmaleate. The polypeptide is 3-isopropylmalate dehydratase large subunit (Streptococcus thermophilus (strain ATCC BAA-250 / LMG 18311)).